A 328-amino-acid polypeptide reads, in one-letter code: GTP 3',8-cyclase (328 aa).

The Radical SAM core domain maps to 1-229; the sequence is MNTVDYLRIS…ESFVPGNGPA (229 aa). R8 is a binding site for GTP. Residues C15 and C19 each contribute to the [4Fe-4S] cluster site. Residue Y21 coordinates S-adenosyl-L-methionine. C22 contacts [4Fe-4S] cluster. Position 60 (R60) interacts with GTP. G64 provides a ligand contact to S-adenosyl-L-methionine. Residue T91 participates in GTP binding. S115 contacts S-adenosyl-L-methionine. K155 provides a ligand contact to GTP. M189 serves as a coordination point for S-adenosyl-L-methionine. Residues C252 and C255 each contribute to the [4Fe-4S] cluster site. A GTP-binding site is contributed by 257-259; sequence RMR. A [4Fe-4S] cluster-binding site is contributed by C269.

Belongs to the radical SAM superfamily. MoaA family. As to quaternary structure, monomer and homodimer. [4Fe-4S] cluster serves as cofactor.

It catalyses the reaction GTP + AH2 + S-adenosyl-L-methionine = (8S)-3',8-cyclo-7,8-dihydroguanosine 5'-triphosphate + 5'-deoxyadenosine + L-methionine + A + H(+). The protein operates within cofactor biosynthesis; molybdopterin biosynthesis. Functionally, catalyzes the cyclization of GTP to (8S)-3',8-cyclo-7,8-dihydroguanosine 5'-triphosphate. The polypeptide is GTP 3',8-cyclase (Trichodesmium erythraeum (strain IMS101)).